The primary structure comprises 419 residues: E3 ubiquitin-protein ligase RNFT1 (419 aa).

The disordered stretch occupies residues 1–120; it reads MKLRAQFDRG…SGESDLESGE (120 aa). 2 stretches are compositionally biased toward polar residues: residues 31-44 and 72-82; these read EPSS…SLTL and GSSSGSTNGRG. The span at 84-102 shows a compositional bias: basic residues; that stretch reads TSRRMRTASHSHSHTHGHG. Helical transmembrane passes span 141 to 161, 187 to 207, 217 to 237, 240 to 260, 270 to 290, and 303 to 323; these read FIVI…AVAV, LHCA…FYTF, FFAN…SVGV, FILK…PCPL, YMLI…PLWF, and VGLT…LLAL. Residues 352–403 are required for ubiquitin ligase activity and for protection against ER stress-induced cell death; sequence IREAGDICPICQADFKQPRVLVCQHIFCEECIAQWLNQERTCPLCRTVITDK. Residues 359 to 397 form an RING-type zinc finger; sequence CPICQADFKQPRVLVCQHIFCEECIAQWLNQERTCPLCR.

It localises to the endoplasmic reticulum membrane. The catalysed reaction is S-ubiquitinyl-[E2 ubiquitin-conjugating enzyme]-L-cysteine + [acceptor protein]-L-lysine = [E2 ubiquitin-conjugating enzyme]-L-cysteine + N(6)-ubiquitinyl-[acceptor protein]-L-lysine.. The protein operates within protein modification; protein ubiquitination. Functionally, E3 ubiquitin-protein ligase that acts in the endoplasmic reticulum (ER)-associated degradation (ERAD) pathway, which targets misfolded proteins that accumulate in the endoplasmic reticulum (ER) for ubiquitination and subsequent proteasome-mediated degradation. Protects cells from ER stress-induced apoptosis. The sequence is that of E3 ubiquitin-protein ligase RNFT1 (rnft1) from Danio rerio (Zebrafish).